We begin with the raw amino-acid sequence, 216 residues long: Imidazole glycerol phosphate synthase subunit HisH 1 (216 aa).

The Glutamine amidotransferase type-1 domain occupies 4 to 216; the sequence is CVLIVDAGLG…LQNFIALNPC (213 aa). Cys84 (nucleophile) is an active-site residue. Residues His195 and Glu197 contribute to the active site.

As to quaternary structure, heterodimer of HisH and HisF.

It is found in the cytoplasm. It carries out the reaction 5-[(5-phospho-1-deoxy-D-ribulos-1-ylimino)methylamino]-1-(5-phospho-beta-D-ribosyl)imidazole-4-carboxamide + L-glutamine = D-erythro-1-(imidazol-4-yl)glycerol 3-phosphate + 5-amino-1-(5-phospho-beta-D-ribosyl)imidazole-4-carboxamide + L-glutamate + H(+). The enzyme catalyses L-glutamine + H2O = L-glutamate + NH4(+). Its pathway is amino-acid biosynthesis; L-histidine biosynthesis; L-histidine from 5-phospho-alpha-D-ribose 1-diphosphate: step 5/9. Functionally, IGPS catalyzes the conversion of PRFAR and glutamine to IGP, AICAR and glutamate. The HisH subunit provides the glutamine amidotransferase activity that produces the ammonia necessary to HisF for the synthesis of IGP and AICAR. The protein is Imidazole glycerol phosphate synthase subunit HisH 1 (hisH1) of Prochlorococcus marinus (strain MIT 9313).